Reading from the N-terminus, the 930-residue chain is Probable outer membrane protein pmp8 (930 aa).

The first 26 residues, 1–26 (MKIPLHKLLISSTLVTPILLSIATYG), serve as a signal peptide directing secretion. The 295-residue stretch at 636-930 (SIYQQRGLWA…NVDCGLRYSF (295 aa)) folds into the Autotransporter domain.

Belongs to the PMP outer membrane protein family.

It is found in the secreted. The protein resides in the cell wall. Its subcellular location is the cell outer membrane. The polypeptide is Probable outer membrane protein pmp8 (pmp8) (Chlamydia pneumoniae (Chlamydophila pneumoniae)).